An 817-amino-acid polypeptide reads, in one-letter code: TPR repeat-containing protein C19B12.01 (817 aa).

2 disordered regions span residues D276–P298 and G386–N413. 4 TPR repeats span residues L459–D492, A521–S554, Y555–D588, and W625–D658.

This chain is TPR repeat-containing protein C19B12.01, found in Schizosaccharomyces pombe (strain 972 / ATCC 24843) (Fission yeast).